The sequence spans 237 residues: Undecaprenyl-diphosphatase (237 aa).

7 consecutive transmembrane segments (helical) span residues 38–58 (QTAV…FDGI), 65–85 (WRII…GVLF), 92–112 (LFSS…ILMF), 126–146 (MSFL…FPGI), 166–186 (ALQY…ILGL), 191–211 (ITIL…YVLS), and 217–237 (GKIW…YLVG).

The protein belongs to the UppP family.

The protein resides in the cell inner membrane. The enzyme catalyses di-trans,octa-cis-undecaprenyl diphosphate + H2O = di-trans,octa-cis-undecaprenyl phosphate + phosphate + H(+). Catalyzes the dephosphorylation of undecaprenyl diphosphate (UPP). Confers resistance to bacitracin. The protein is Undecaprenyl-diphosphatase of Thermotoga petrophila (strain ATCC BAA-488 / DSM 13995 / JCM 10881 / RKU-1).